A 712-amino-acid polypeptide reads, in one-letter code: Transferrin-binding protein B (712 aa).

The N-terminal stretch at 1–20 (MNNPLVNQAAMVLPVFLLSA) is a signal peptide. C21 carries the N-palmitoyl cysteine lipid modification. A lipid anchor (S-diacylglycerol cysteine) is attached at C21. Positions 59 to 196 (GGYGFAMRLK…YHGKEPSRQL (138 aa)) are N-terminal handle domain. Disordered stretches follow at residues 78–104 (EDEV…PKRQ), 123–144 (PYLK…QPKN), 223–256 (IIQP…LTDG), 309–338 (NGKA…SLSG), 364–398 (SAKT…SSEN), 442–495 (ASES…GDTN), and 689–712 (NATN…QPVR). A compositionally biased stretch (basic and acidic residues) spans 95 to 104 (DEPKELPKRQ). Over residues 128-144 (SNHQNGNTGNGINQPKN) the composition is skewed to polar residues. Residues 197 to 367 (PASGKITYKG…KVAVVGSAKT (171 aa)) form an N-terminal beta barrel domain region. Low complexity-rich tracts occupy residues 372-398 (ANGN…SSEN) and 446-459 (GNNQ…GGTA). Positions 389 to 555 (NGAAGTSSEN…SMFLQGERTD (167 aa)) are C-terminal handle domain. Residues 462 to 475 (RKFDHTPESDKKDA) are compositionally biased toward basic and acidic residues. Composition is skewed to polar residues over residues 477-495 (AGTQ…GDTN) and 689-700 (NATNASGNSSAT). Residues 556 to 712 (EKEIPSEQNI…FGAKRQQPVR (157 aa)) are C-terminal beta barrel domain.

It belongs to the TbpB family. Isotype II subfamily. As to quaternary structure, binds only human holo-transferrin (TF), via the TF C-terminus. Forms a large complex with TF and TbpA. Interacts via its C-terminal domain with Slam1.

Its subcellular location is the cell outer membrane. It is found in the cell surface. In terms of biological role, neisseria acquires iron by extracting it from serum transferrin (TF) in its human host. Acts as a TF receptor and is required for TF utilization. Involved in the initial capture of TF. Helps select only those TF molecules that can be used as an iron source and concentrates them on the cell surface, maintaining the iron-loaded status of the TF C-terminal lobe until its delivery to TbpA. In Neisseria meningitidis serogroup B (strain ATCC BAA-335 / MC58), this protein is Transferrin-binding protein B.